The primary structure comprises 66 residues: Large ribosomal subunit protein bL33c (66 aa).

The protein belongs to the bacterial ribosomal protein bL33 family.

It is found in the plastid. It localises to the chloroplast. This chain is Large ribosomal subunit protein bL33c, found in Drimys granadensis.